The primary structure comprises 360 residues: Dihydroorotate dehydrogenase (quinone) (360 aa).

Residues 60-64 (AGFDK) and T84 each bind FMN. A substrate-binding site is contributed by K64. 109–113 (NRMGF) provides a ligand contact to substrate. FMN contacts are provided by N137 and N168. A substrate-binding site is contributed by N168. S171 functions as the Nucleophile in the catalytic mechanism. Substrate is bound at residue N173. 2 residues coordinate FMN: K213 and S241. 242-243 (NT) lines the substrate pocket. Residues G264, G293, and 314-315 (YS) contribute to the FMN site.

Belongs to the dihydroorotate dehydrogenase family. Type 2 subfamily. In terms of assembly, monomer. The cofactor is FMN.

It is found in the cell membrane. It carries out the reaction (S)-dihydroorotate + a quinone = orotate + a quinol. It participates in pyrimidine metabolism; UMP biosynthesis via de novo pathway; orotate from (S)-dihydroorotate (quinone route): step 1/1. Catalyzes the conversion of dihydroorotate to orotate with quinone as electron acceptor. This chain is Dihydroorotate dehydrogenase (quinone), found in Bartonella tribocorum (strain CIP 105476 / IBS 506).